The chain runs to 513 residues: Protein CYCLOPS (513 aa).

The interval 327-435 (QIHGGTASGE…ERSRKMAEAK (109 aa)) is disordered. The segment covering 334–347 (SGEPSQSESSAAAP) has biased composition (low complexity). The span at 359–381 (PSNSSQTLCDSSWKQVGESTQNR) shows a compositional bias: polar residues. Residues 384-396 (GVREQIMDNLKDD) show a composition bias toward basic and acidic residues. Short sequence motifs (nuclear localization signal) lie at residues 397–401 (RKRKR) and 421–424 (KKRR). Positions 447 to 513 (MQAVMKRCEN…ERLLSETGKI (67 aa)) form a coiled coil.

Belongs to the CYCLOPS family.

It localises to the nucleus. Involved symbiotic signaling. Required for root infection by symbiotic rhizobia, infection thread (IT) formation, and nodule development. Required for symbiosome formation (i.e. the release of the bacteria from the ITs) and subsequent symbiosome development. Involved in arbuscular mycorrhizal (AM) symbiosis. This Pisum sativum (Garden pea) protein is Protein CYCLOPS.